Here is a 206-residue protein sequence, read N- to C-terminus: Protease (206 aa).

Active-site residues include H54, D71, and C122.

The protein belongs to the peptidase C5 family. Interacts with protease cofactor pVI-C; this interaction is necessary for protease activation.

It localises to the virion. The protein resides in the host nucleus. It carries out the reaction Cleaves proteins of the adenovirus and its host cell at two consensus sites: -Yaa-Xaa-Gly-Gly-|-Xaa- and -Yaa-Xaa-Gly-Xaa-|-Gly- (in which Yaa is Met, Ile or Leu, and Xaa is any amino acid).. Requires DNA and protease cofactor for maximal activation. Inside nascent virions, becomes partially activated by binding to the viral DNA, allowing it to cleave the cofactor that binds to the protease and fully activates it. Actin, like the viral protease cofactor, seems to act as a cofactor in the cleavage of cytokeratin 18 and of actin itself. Its function is as follows. Cleaves viral precursor proteins (pTP, pIIIa, pVI, pVII, pVIII, and pX) inside newly assembled particles giving rise to mature virions. Protease complexed to its cofactor slides along the viral DNA to specifically locate and cleave the viral precursors. Mature virions have a weakened organization compared to the unmature virions, thereby facilitating subsequent uncoating. Without maturation, the particle lacks infectivity and is unable to uncoat. Late in adenovirus infection, in the cytoplasm, may participate in the cytoskeleton destruction. Cleaves host cell cytoskeletal keratins K7 and K18. In Homo sapiens (Human), this protein is Protease.